A 275-amino-acid polypeptide reads, in one-letter code: Autophagy protein 5 (275 aa).

The residue at position 1 (M1) is an N-acetylmethionine. K130 is covalently cross-linked (Glycyl lysine isopeptide (Lys-Gly) (interchain with G-Cter in ATG12)).

It belongs to the ATG5 family. In terms of assembly, forms a conjugate with ATG12. Part of the minor complex composed of 4 sets of ATG12-ATG5 and ATG16L1 (400 kDa); this complex interacts with ATG3 leading to disruption of ATG7 interaction and promotion of ATG8-like proteins lipidation. Forms an 800-kDa complex composed of ATG12-ATG5 and ATG16L2. The ATG12-ATG5 conjugate interacts with RAB33A; this interaction is bridged by ATG16L1 and promotes ATG12-ATG5-ATG16L1 complex recruitment to phagophores. Interacts with TECPR1; the interaction is direct and does not take place when ATG16L1 is associated with the ATG5-ATG12 conjugate. Interacts with DHX58/RIG-1, IFIH1/MDA5 and MAVS/IPS-1 in monomeric form as well as in ATG12-ATG5 conjugate form. The interaction with MAVS is further enhanced upon vesicular stomatitis virus (VSV) infection. Interacts with ATG3. Interacts with ATG7 and ATG10. Interacts with FADD. Interacts with Bassoon/BSN; this interaction is important for the regulation of presynaptic autophagy. Interacts with ATG16L2. In terms of processing, conjugated to ATG12; which is essential for autophagy, but is not required for association with isolation membrane. Acetylated by EP300.

It is found in the cytoplasm. The protein resides in the preautophagosomal structure membrane. Its function is as follows. Involved in autophagic vesicle formation. Conjugation with ATG12, through a ubiquitin-like conjugating system involving ATG7 as an E1-like activating enzyme and ATG10 as an E2-like conjugating enzyme, is essential for its function. The ATG12-ATG5 conjugate acts as an E3-like enzyme which is required for lipidation of ATG8 family proteins and their association to the vesicle membranes. Involved in mitochondrial quality control after oxidative damage, and in subsequent cellular longevity. Plays a critical role in multiple aspects of lymphocyte development and is essential for both B and T lymphocyte survival and proliferation. Required for optimal processing and presentation of antigens for MHC II. Involved in the maintenance of axon morphology and membrane structures, as well as in normal adipocyte differentiation. Promotes primary ciliogenesis through removal of OFD1 from centriolar satellites and degradation of IFT20 via the autophagic pathway. As part of the ATG8 conjugation system with ATG12 and ATG16L1, required for recruitment of LRRK2 to stressed lysosomes and induction of LRRK2 kinase activity in response to lysosomal stress. Functionally, may play an important role in the apoptotic process, possibly within the modified cytoskeleton. Its expression is a relatively late event in the apoptotic process, occurring downstream of caspase activity. Plays a crucial role in IFN-gamma-induced autophagic cell death by interacting with FADD. This Sus scrofa (Pig) protein is Autophagy protein 5.